Consider the following 239-residue polypeptide: 6-phosphogluconolactonase (239 aa).

The protein belongs to the glucosamine/galactosamine-6-phosphate isomerase family. 6-phosphogluconolactonase subfamily.

The enzyme catalyses 6-phospho-D-glucono-1,5-lactone + H2O = 6-phospho-D-gluconate + H(+). The protein operates within carbohydrate degradation; pentose phosphate pathway; D-ribulose 5-phosphate from D-glucose 6-phosphate (oxidative stage): step 2/3. In terms of biological role, hydrolysis of 6-phosphogluconolactone to 6-phosphogluconate. This is 6-phosphogluconolactonase (pgl) from Xylella fastidiosa (strain 9a5c).